The chain runs to 424 residues: Elongation factor 1-alpha (424 aa).

The tr-type G domain maps to 5–223 (KPHLNLITIG…DAFKVPEKPI (219 aa)). The segment at 14–21 (GHVDHGKS) is G1. Residue 14–21 (GHVDHGKS) coordinates GTP. Ser-21 contacts Mg(2+). The segment at 70 to 74 (GVTID) is G2. The interval 91-94 (DAPG) is G3. GTP contacts are provided by residues 91 to 95 (DAPGH) and 148 to 151 (NKMD). Positions 148-151 (NKMD) are G4. The segment at 187–189 (SGY) is G5.

It belongs to the TRAFAC class translation factor GTPase superfamily. Classic translation factor GTPase family. EF-Tu/EF-1A subfamily.

Its subcellular location is the cytoplasm. It carries out the reaction GTP + H2O = GDP + phosphate + H(+). GTP hydrolase that promotes the GTP-dependent binding of aminoacyl-tRNA to the A-site of ribosomes during protein biosynthesis. This chain is Elongation factor 1-alpha, found in Thermoplasma acidophilum (strain ATCC 25905 / DSM 1728 / JCM 9062 / NBRC 15155 / AMRC-C165).